The primary structure comprises 95 residues: ESAT-6-like protein EsxH (95 aa).

It belongs to the WXG100 family. ESAT-6 subfamily. As to quaternary structure, forms a tight 1:1 complex with EsxG.

The protein resides in the secreted. This chain is ESAT-6-like protein EsxH, found in Mycolicibacterium smegmatis (strain ATCC 700084 / mc(2)155) (Mycobacterium smegmatis).